Reading from the N-terminus, the 414-residue chain is Enolase (414 aa).

Gln-162 contributes to the (2R)-2-phosphoglycerate binding site. Catalysis depends on Glu-204, which acts as the Proton donor. Positions 239, 280, and 307 each coordinate Mg(2+). (2R)-2-phosphoglycerate is bound by residues Lys-332, Arg-361, Ser-362, and Lys-383. Lys-332 acts as the Proton acceptor in catalysis.

Belongs to the enolase family. Mg(2+) is required as a cofactor.

The protein resides in the cytoplasm. It is found in the secreted. Its subcellular location is the cell surface. It catalyses the reaction (2R)-2-phosphoglycerate = phosphoenolpyruvate + H2O. Its pathway is carbohydrate degradation; glycolysis; pyruvate from D-glyceraldehyde 3-phosphate: step 4/5. Functionally, catalyzes the reversible conversion of 2-phosphoglycerate (2-PG) into phosphoenolpyruvate (PEP). It is essential for the degradation of carbohydrates via glycolysis. This chain is Enolase, found in Campylobacter jejuni (strain RM1221).